Reading from the N-terminus, the 115-residue chain is MSYKPNLAAHMPAAALNAAGSVHSPSTSMATSSQYRQLLSDYGPPSLGYTQGTGNSQVPQSKYAELLAIIEELGKEIRPTYAGSKSAMERLKRGIIHARGLVRECLAETERNARS.

Residues 20–25 are interaction with CDK2AP2; it reads GSVHSP. At serine 46 the chain carries Phosphoserine; by IKKE.

The protein belongs to the CDK2AP family. In terms of assembly, homodimer. Component of the nucleosome remodeling and deacetylase (NuRD) repressor complex, composed of core proteins MTA1, MTA2, MTA3, RBBP4, RBBP7, HDAC1, HDAC2, MBD2, MBD3, and peripherally associated proteins CDK2AP1, CDK2AP2, GATAD2A, GATAD2B, CHD3, CHD4 and CHD5. The exact stoichiometry of the NuRD complex is unknown, and some subunits such as MBD2 and MBD3, GATAD2A and GATAD2B, and CHD3, CHD4 and CHD5 define mutually exclusive NuRD complexes. Interacts with monomeric unphosphorylated CDK2. Interacts with CDK2AP2. Interacts with GATAD2A. Interacts with HDAC1. Interacts with HDAC2. Interacts with MBD2. Interacts with MBD3. Interacts with RBBP4. Interacts with RBBP7. In terms of processing, phosphorylated in vitro by IKBKE at Ser-46.

The protein resides in the nucleus. Its subcellular location is the chromosome. Functionally, inhibitor of cyclin-dependent kinase CDK2. Also acts as a component of the histone deacetylase NuRD complex which participates in the remodeling of chromatin. The protein is Cyclin-dependent kinase 2-associated protein 1 (CDK2AP1) of Homo sapiens (Human).